The sequence spans 224 residues: Large ribosomal subunit protein uL1 (224 aa).

Belongs to the universal ribosomal protein uL1 family. As to quaternary structure, part of the 50S ribosomal subunit.

Functionally, binds directly to 23S rRNA. The L1 stalk is quite mobile in the ribosome, and is involved in E site tRNA release. In terms of biological role, protein L1 is also a translational repressor protein, it controls the translation of the L11 operon by binding to its mRNA. The protein is Large ribosomal subunit protein uL1 of Borrelia duttonii (strain Ly).